A 317-amino-acid polypeptide reads, in one-letter code: D-aminoacyl-tRNA deacylase (317 aa).

Belongs to the DtdA deacylase family. Zn(2+) is required as a cofactor. As to expression, ubiquitous.

It is found in the nucleus. The protein localises to the cytoplasm. It catalyses the reaction a D-aminoacyl-tRNA + H2O = a tRNA + a D-alpha-amino acid + H(+). It carries out the reaction glycyl-tRNA(Ala) + H2O = tRNA(Ala) + glycine + H(+). In terms of biological role, hydrolyzes D-aminoacyl-tRNA into D-amino acid and free tRNA. Broad specificity toward the amino acid, but strict specificity toward the D-isomer. Seems to be required for ethanol tolerance. In Arabidopsis thaliana (Mouse-ear cress), this protein is D-aminoacyl-tRNA deacylase (GEK1).